Consider the following 1486-residue polypeptide: MASAADDSALGGQEERESFTIYHEGRELQLHWRGLPPLQRFPASRICSNAGGELLLLTTDHALYSAKLQANREHMDLQLLRTDVVDMDFCSGSQELFVVLTNGSVQRQATGSGRDVGHPHAWQTLGFDPLELHAEGVRIRRVCCSAQGVVFVGASGETYVMGSCGEVFKAEQQPRHMRLYEEGKELLDLAAGNEHFVMLVAPYNLADDALQLSVASAKEEPEDERASVKSISSGHSERSVAANTRHLLHQGYALLHTQLFTFGASNNGLLGSGDHIRRANVMRLQKLDSMGVCSIAAGLEHTVARTLDGRLYHWGLNNHSQLGEDVSSPMEITITENTAALPIEQNSALEATCGDYHTLLLNASGQIHSLQPAPPMRHLQQSSTYAQTLLQLQLGAAWPRQLRLLMCSGGYTLQNQRQFQRQYHYYLSHLQSQLQLLLKHRQAVQTLEIWQRQSALEPLSALGPLLINWERILCLLVATLHSLEGFYRADFVQPADLLFICHYKEYIDLFDGYTKAYCDVFSVNGFGEAVVAITGLSSPLAELNEESYVTRLFQQPFSIYQLFVQFMELLVRTQSEYGEHRVAWSEFARHSCISQELAVNTKDFWSSNDRNPRIVQFRGRHRRVILTSALVPLKLVTSGISRSSNSFILFSDFLCQVSGNSLYSYPLTTLWVWTEGDSLRLTTPEKSFLVSTRSQEMRKVWLDQLQSSIIASLGKPLGSPVPSYRSTGYEFSREHPKFSRVKACGTWRKGVLHGNCYLEYPDGSVYCGELQHGIIEGFGKMVIPTTGLYVGNFKGGRFHGHGVYEMHCKDSPESEVYEGNFCEGLFHGHGVMRNNRYIYVGEYQANARSGYGVIEDLVSGDKYMGMFADNKRSGIGSCITNRGDYFEGSFSGDDLTGSGVAVFENDYYYEGELTLLGPNGRGEYYMPSGDACGGSGAMGTGEFDDTCELIGNKMFGQLSGTWDTVRIQAGELVLNRRFPKYPSSLGRQVVDHNRKWRSLFNNFESDLANCTASTSSSGGNQSAGTLRKSSKPTLSTAQIWNCIAVYMSKQRAREGTKPGNYFNNILLSLPLPQKTSSPLAKARTTTSALSKLQTEAASALDFLGFPPRRIQSQEALNSKPGGLQRADSLISMGHNTSRDLDNSSLASFQLDQSLMNSTVNGDESSTFNESFSKLSHNNNNSISKHMNNIDCSITSTTSTTSAVLDQVPSFGMALVLTEQDVTSIRLYLEQAFKDRHHPLYVLNERIANCFHYSYGYWKVKPTPILAKQAMREWESISRRIYRFVRKMFPALPEELCQMEGSREVISHITLLYPLVLSEGIYSTLFVLYANKYSRKDEMYRQNLNLAEKLKDQELVELMGHESFLHNVMLDPKFVESVQTLKELQEKFSPQDMLTVIQRSTQLLTEAYEHAMAANAAQLNADNMIPLTMLTMLRAAVPHLGAELALLDDLTGGPNFQAEMNGMAGYCYTTLKAAYEHVTSRALQKIP.

RCC1 repeat units follow at residues 147 to 201 (QGVV…MLVA), 256 to 307 (HTQL…ARTL), and 308 to 363 (DGRL…LLNA). 6 MORN repeats span residues 744–765 (CGTWRKGVLHGNCYLEYPDGSV), 766–784 (YCGELQHGIIEGFGKMVIP), 789–804 (YVGNFKGGRFHGHGVY), 817–832 (YEGNFCEGLFHGHGVM), 839–853 (YVGEYQANARSGYGV), and 863–884 (YMGMFADNKRSGIGSCITNRGD). The VPS9 domain maps to 1333–1486 (SRKDEMYRQN…VTSRALQKIP (154 aa)).

In the embryo, expressed in a wide range of tissues including the epidermis and the ventral nerve cord.

In terms of biological role, has guanine nucleotide exchange factor (GEF) activity towards Rab5. Promotes the exchange of GDP to GTP, converting inactive GDP-bound Rab5 into its active GTP-bound form. The polypeptide is Alsin homolog (Drosophila melanogaster (Fruit fly)).